A 120-amino-acid chain; its full sequence is Large ribosomal subunit protein bL20 (120 aa).

It belongs to the bacterial ribosomal protein bL20 family.

Functionally, binds directly to 23S ribosomal RNA and is necessary for the in vitro assembly process of the 50S ribosomal subunit. It is not involved in the protein synthesizing functions of that subunit. The sequence is that of Large ribosomal subunit protein bL20 from Desulfitobacterium hafniense (strain DSM 10664 / DCB-2).